We begin with the raw amino-acid sequence, 127 residues long: Glycine cleavage system H protein (127 aa).

Residues 22-104 (KARIGITHFA…YEKAWMIVVE (83 aa)) enclose the Lipoyl-binding domain. At Lys-63 the chain carries N6-lipoyllysine.

The protein belongs to the GcvH family. In terms of assembly, the glycine cleavage system is composed of four proteins: P, T, L and H. (R)-lipoate is required as a cofactor.

Functionally, the glycine cleavage system catalyzes the degradation of glycine. The H protein shuttles the methylamine group of glycine from the P protein to the T protein. In terms of biological role, is also involved in protein lipoylation via its role as an octanoyl/lipoyl carrier protein intermediate. The sequence is that of Glycine cleavage system H protein from Bacillus subtilis (strain 168).